A 606-amino-acid chain; its full sequence is Putative amino acid transporter AAT1 (606 aa).

A disordered region spans residues 1 to 156; it reads MNKKYGTSSN…DEEGTNKPKR (156 aa). Composition is skewed to basic and acidic residues over residues 12 to 25 and 72 to 89; these read HDNKKDKKNNADKN and SDKKNEKSDKNEKNESSK. A compositionally biased stretch (acidic residues) spans 140–149; sequence SDGDYTNDEE. 11 consecutive transmembrane segments (helical) span residues 175-194, 200-225, 246-271, 283-301, 313-332, 352-372, 393-412, 428-449, 522-539, 545-567, and 579-605; these read TVLFICTAIGVGFLSIPYVF, ILSIILIILNAFESYVTTNILCTSSL, TIIDFGLSFGFVSSYILILILISNFL, LFTNNVFLVILICLLILPI, FLIFSLFSLSITVLTIGLQT, HFFKCFNILLFSFSQQPNACF, VILQVIFYTLFGILGYFSFL, VSILLCKFLLSLTFFFSVPLNF, MWISVIVTIFCALIACKV, VIGIGGGITSTLISCLLPNLIYY, and RYSTLFMLCFFSFMGFLSVVVTTLNLI.

This sequence belongs to the amino acid/polyamine transporter 2 family.

It is found in the vacuole membrane. In terms of biological role, putative amino acid transporter. Probably transports tryptophan. Involved in maintaining the osmotic homeostasis of the digestive vacuole. Important for the timely development and growth of the asexual-stage parasites and male gametocyte maturation. This Plasmodium falciparum (isolate 3D7) protein is Putative amino acid transporter AAT1.